The chain runs to 130 residues: MAKQVRKTGKKKEKKNIPEGIAHIQSTFNNTIITITDPIGNVIAWSSSGMQGFKGSRKSTPFAAQMAAEDCVKKAKEHGLRKVQVYVKGPGSGRESALRSLQAAGLTISLIRDVTPIPHNGCRPPKRRRV.

Belongs to the universal ribosomal protein uS11 family. Part of the 30S ribosomal subunit. Interacts with proteins S7 and S18. Binds to IF-3.

Located on the platform of the 30S subunit, it bridges several disparate RNA helices of the 16S rRNA. Forms part of the Shine-Dalgarno cleft in the 70S ribosome. This chain is Small ribosomal subunit protein uS11, found in Syntrophus aciditrophicus (strain SB).